A 208-amino-acid chain; its full sequence is uncharacterized protein (208 aa).

This is an uncharacterized protein from Legionella pneumophila subsp. pneumophila (strain Philadelphia 1 / ATCC 33152 / DSM 7513).